Reading from the N-terminus, the 406-residue chain is Cysteine desulfurase (406 aa).

Lysine 226 is modified (N6-(pyridoxal phosphate)lysine). The active-site Cysteine persulfide intermediate is cysteine 364.

The protein belongs to the class-V pyridoxal-phosphate-dependent aminotransferase family. Csd subfamily. Homodimer. Interacts with SufE and the SufBCD complex composed of SufB, SufC and SufD. The interaction with SufE is required to mediate the direct transfer of the sulfur atom from the S-sulfanylcysteine. The cofactor is pyridoxal 5'-phosphate.

The protein resides in the cytoplasm. The catalysed reaction is (sulfur carrier)-H + L-cysteine = (sulfur carrier)-SH + L-alanine. The enzyme catalyses L-selenocysteine + AH2 = hydrogenselenide + L-alanine + A + H(+). The protein operates within cofactor biosynthesis; iron-sulfur cluster biosynthesis. In terms of biological role, cysteine desulfurases mobilize the sulfur from L-cysteine to yield L-alanine, an essential step in sulfur metabolism for biosynthesis of a variety of sulfur-containing biomolecules. Component of the suf operon, which is activated and required under specific conditions such as oxidative stress and iron limitation. Acts as a potent selenocysteine lyase in vitro, that mobilizes selenium from L-selenocysteine. Selenocysteine lyase activity is however unsure in vivo. In Salmonella agona (strain SL483), this protein is Cysteine desulfurase.